A 611-amino-acid polypeptide reads, in one-letter code: Oxidoreductase cicC (611 aa).

Residues 1–20 form the signal peptide; it reads MALRYLNKFSLLSLAVPTLA. FAD contacts are provided by residues 45-46 and 65-66; these read NA and EA. Asn-76 and Asn-113 each carry an N-linked (GlcNAc...) asparagine glycan. FAD is bound by residues Val-123 and 131 to 134; that span reads NLMT. 3 N-linked (GlcNAc...) asparagine glycosylation sites follow: Asn-282, Asn-410, and Asn-475. The active-site Proton acceptor is the His-547. His-547 acts as the Proton donor in catalysis. Ala-581 is an FAD binding site. His-591 (proton acceptor) is an active-site residue. 592 to 593 provides a ligand contact to FAD; it reads PI.

Belongs to the GMC oxidoreductase family. The cofactor is FAD.

The protein operates within phytotoxin biosynthesis. Its function is as follows. Oxidoreductase; part of the gene cluster that mediates the biosynthesis of cichorine, a phytotoxin active against knapweed, corn, and soybeans. The first step in the pathway is performed by the non-reducing polyketide synthase pkbA that condenses one acetyl-CoA starter unit with 3 malonyl-CoA units. PkbA also catalyzes one methylation step to produce 3-methylorsellinate. The nonribosomal peptide synthase-like protein cicB, the cytochrome P450 monooxygenase cicH and the O-methyltransferase cicE are involved in the conversion of 3-methylorsellinate into nidulol. CicB converts 3-methylorsellinate to a yet unidentified intermediate, cicH may play a ring-closing role for cichorine and cicE is plausibly responsible for the methylation of one of the phenol groups. The oxidoreductase cicC acts downstream with still unidentified enzymes to further convert nidulol into cichorine. This is Oxidoreductase cicC from Emericella nidulans (strain FGSC A4 / ATCC 38163 / CBS 112.46 / NRRL 194 / M139) (Aspergillus nidulans).